The primary structure comprises 206 residues: Large ribosomal subunit protein uL3 (206 aa).

The disordered stretch occupies residues Ser-127 to Ala-151.

It belongs to the universal ribosomal protein uL3 family. Part of the 50S ribosomal subunit. Forms a cluster with proteins L14 and L19.

Functionally, one of the primary rRNA binding proteins, it binds directly near the 3'-end of the 23S rRNA, where it nucleates assembly of the 50S subunit. This chain is Large ribosomal subunit protein uL3, found in Borreliella afzelii (strain PKo) (Borrelia afzelii).